A 481-amino-acid chain; its full sequence is MVKICCIGAGYVGGPTMAVMALKCPEIEVVVVDISEPRINAWNSDRLPIYEPGLEDVVKQCRGKNLFFSTDVEKHVFESDIVFVSVNTPTKTQGLGAGKAADLTYWESAARMIADVSKSSKIVVEKSTVPVRTAEAIEKILTHNSKGIEFQILSNPEFLAEGTAIKDLYNPDRVLIGGRDTAAGQKAIKALRDVYAHWVPVEQIICTNLWSAELSKLAANAFLAQRISSVNAMSALCEATGADVTQVAHAVGTDTRIGPKFLNASVGFGGSCFQKDILNLIYICECNGLPEAANYWKQVVKVNDYQKIRFANRVVSSMFNTVSGKKIAILGFAFKKDTGDTRETPAIDVCNRLVADKAKLSIYDPQVLEEQIRRDLSMARFDWDHPVPLQQIKAEGISEQVNVVSDAYEATKDAHGLCVLTEWDEFKSLDFKKIFDNMQKPAFVFDGRNVVDAVKLREIGFIVYSIGKPLDSWLKDMPAVA.

NAD(+) is bound by residues 8–13 (GAGYVG), Asp33, Arg38, 86–90 (VNTPT), 127–128 (ST), and Glu161. Substrate-binding positions include 157-161 (EFLAE), 216-223 (KLAANAFL), and 256-269 (RIGP…VGFG). Cys272 functions as the Nucleophile in the catalytic mechanism. 272-275 (CFQK) contributes to the NAD(+) binding site. A substrate-binding site is contributed by 334–335 (FK). Arg342 contacts NAD(+). Residue Arg448 participates in substrate binding.

The protein belongs to the UDP-glucose/GDP-mannose dehydrogenase family.

It catalyses the reaction UDP-alpha-D-glucose + 2 NAD(+) + H2O = UDP-alpha-D-glucuronate + 2 NADH + 3 H(+). The protein operates within nucleotide-sugar biosynthesis; UDP-alpha-D-glucuronate biosynthesis; UDP-alpha-D-glucuronate from UDP-alpha-D-glucose: step 1/1. Its activity is regulated as follows. Inhibited by UDP-xylose. Its function is as follows. Involved in the biosynthesis of UDP-glucuronic acid (UDP-GlcA), providing nucleotide sugars for cell-wall polymers. This Arabidopsis thaliana (Mouse-ear cress) protein is UDP-glucose 6-dehydrogenase 1 (UGD1).